Here is a 468-residue protein sequence, read N- to C-terminus: MNPNQKIITIGSASLGLVIFNILLHVASITLGIISVTKDNKVHICNTTEVYNETVRVETVVIPVNNTIYLNHEPEFLNNTEPLCDVSGFAIVSKDNGIRIGSRGHIFVIREPFVSCGPSECRTFFLTQGALLNDKHSNNTVKDRSPYRALMSVPLGSSPNAYQAKFESVGWSATACHDGKKWMAIGVSGADDDAYAVIHYGGVPTDVIRSWRKQILRTQESSCVCIKGECYWVMTDGPANNQASYKIFKSQKGMVVDEKEISFQGGHIEECSCYPNMGKVECVCRDNWNGMNRPILIFDEKLEYEVGYLCAGIPTDTPRVQDSSFTGSCTNAVGRSGTNNYGVKGFGFRQGNSVWAGRTISVSSRSGFEVLLIEDGWIRPSKTISKKVEVLNNKNWSGYSGAFTIPTAMTSKNCIVPCFWLEMIRGKPEERTSIWTSSSSTVFCGVSSEVPGWSWDDGAILPFDIDKM.

Residues 1 to 15 (MNPNQKIITIGSASL) lie on the Intravirion side of the membrane. An involved in apical transport and lipid raft association region spans residues 11–33 (GSASLGLVIFNILLHVASITLGI). Residues 16 to 36 (GLVIFNILLHVASITLGIISV) form a helical membrane-spanning segment. Residues 36–80 (VTKDNKVHICNTTEVYNETVRVETVVIPVNNTIYLNHEPEFLNNT) are hypervariable stalk region. The Virion surface segment spans residues 37-468 (TKDNKVHICN…AILPFDIDKM (432 aa)). N-linked (GlcNAc...) asparagine; by host glycosylation is found at Asn-46, Asn-52, Asn-65, and Asn-78. A head of neuraminidase region spans residues 83 to 468 (LCDVSGFAIV…AILPFDIDKM (386 aa)). 8 disulfide bridges follow: Cys-84/Cys-414, Cys-116/Cys-121, Cys-176/Cys-223, Cys-225/Cys-230, Cys-271/Cys-284, Cys-273/Cys-282, Cys-310/Cys-329, and Cys-418/Cys-444. Position 110 (Arg-110) interacts with substrate. Asn-138 carries an N-linked (GlcNAc...) asparagine; by host glycan. The active-site Proton donor/acceptor is the Asp-143. Arg-144 is a binding site for substrate. 269–270 (EE) lines the substrate pocket. Position 285 (Arg-285) interacts with substrate. Positions 286, 290, and 316 each coordinate Ca(2+). Arg-365 serves as a coordination point for substrate. N-linked (GlcNAc...) asparagine; by host glycosylation occurs at Asn-395. Tyr-399 functions as the Nucleophile in the catalytic mechanism.

The protein belongs to the glycosyl hydrolase 34 family. Homotetramer. The cofactor is Ca(2+). In terms of processing, N-glycosylated.

The protein resides in the virion membrane. It localises to the host apical cell membrane. The catalysed reaction is Hydrolysis of alpha-(2-&gt;3)-, alpha-(2-&gt;6)-, alpha-(2-&gt;8)- glycosidic linkages of terminal sialic acid residues in oligosaccharides, glycoproteins, glycolipids, colominic acid and synthetic substrates.. Its activity is regulated as follows. Inhibited by the neuraminidase inhibitors zanamivir (Relenza) and oseltamivir (Tamiflu). These drugs interfere with the release of progeny virus from infected cells and are effective against all influenza strains. Resistance to neuraminidase inhibitors is quite rare. Functionally, catalyzes the removal of terminal sialic acid residues from viral and cellular glycoconjugates. Cleaves off the terminal sialic acids on the glycosylated HA during virus budding to facilitate virus release. Additionally helps virus spread through the circulation by further removing sialic acids from the cell surface. These cleavages prevent self-aggregation and ensure the efficient spread of the progeny virus from cell to cell. Otherwise, infection would be limited to one round of replication. Described as a receptor-destroying enzyme because it cleaves a terminal sialic acid from the cellular receptors. May facilitate viral invasion of the upper airways by cleaving the sialic acid moieties on the mucin of the airway epithelial cells. Likely to plays a role in the budding process through its association with lipid rafts during intracellular transport. May additionally display a raft-association independent effect on budding. Plays a role in the determination of host range restriction on replication and virulence. Sialidase activity in late endosome/lysosome traffic seems to enhance virus replication. This is Neuraminidase from Aves.